We begin with the raw amino-acid sequence, 290 residues long: Dihydroorotate dehydrogenase B (NAD(+)), catalytic subunit (290 aa).

FMN-binding positions include Ser-17 and 42 to 43 (KT). Residues Lys-42, 67–71 (NAIGL), and Asn-117 contribute to the substrate site. An FMN-binding site is contributed by Asn-117. Ser-120 (nucleophile) is an active-site residue. 2 residues coordinate FMN: Lys-152 and Ile-177. Residue 178-179 (NT) participates in substrate binding. Residues Gly-203, 229–230 (GG), and 251–252 (GT) each bind FMN.

Belongs to the dihydroorotate dehydrogenase family. Type 1 subfamily. As to quaternary structure, heterotetramer of 2 PyrK and 2 PyrD type B subunits. It depends on FMN as a cofactor.

The protein resides in the cytoplasm. It carries out the reaction (S)-dihydroorotate + NAD(+) = orotate + NADH + H(+). Its pathway is pyrimidine metabolism; UMP biosynthesis via de novo pathway; orotate from (S)-dihydroorotate (NAD(+) route): step 1/1. Its function is as follows. Catalyzes the conversion of dihydroorotate to orotate with NAD(+) as electron acceptor. This Saccharolobus solfataricus (strain ATCC 35092 / DSM 1617 / JCM 11322 / P2) (Sulfolobus solfataricus) protein is Dihydroorotate dehydrogenase B (NAD(+)), catalytic subunit (pyrD).